A 335-amino-acid polypeptide reads, in one-letter code: Glycerol-3-phosphate dehydrogenase [NAD(P)+] (335 aa).

Lys109 is an NADPH binding site. Residues Lys109, Gly141, and Ser143 each contribute to the sn-glycerol 3-phosphate site. Position 145 (Ala145) interacts with NADPH. Positions 196, 249, 259, 260, and 261 each coordinate sn-glycerol 3-phosphate. Lys196 acts as the Proton acceptor in catalysis. Arg260 contributes to the NADPH binding site. Glu283 is an NADPH binding site.

This sequence belongs to the NAD-dependent glycerol-3-phosphate dehydrogenase family.

It localises to the cytoplasm. The enzyme catalyses sn-glycerol 3-phosphate + NAD(+) = dihydroxyacetone phosphate + NADH + H(+). It catalyses the reaction sn-glycerol 3-phosphate + NADP(+) = dihydroxyacetone phosphate + NADPH + H(+). It functions in the pathway membrane lipid metabolism; glycerophospholipid metabolism. In terms of biological role, catalyzes the reduction of the glycolytic intermediate dihydroxyacetone phosphate (DHAP) to sn-glycerol 3-phosphate (G3P), the key precursor for phospholipid synthesis. The polypeptide is Glycerol-3-phosphate dehydrogenase [NAD(P)+] (Mycoplasma mobile (strain ATCC 43663 / 163K / NCTC 11711) (Mesomycoplasma mobile)).